The primary structure comprises 191 residues: UPF0312 protein SO_3370 (191 aa).

The N-terminal stretch at 1 to 22 (MKKQLFSALIGASLFAPMAVSA) is a signal peptide.

Belongs to the UPF0312 family. Type 1 subfamily.

The protein localises to the periplasm. This chain is UPF0312 protein SO_3370, found in Shewanella oneidensis (strain ATCC 700550 / JCM 31522 / CIP 106686 / LMG 19005 / NCIMB 14063 / MR-1).